We begin with the raw amino-acid sequence, 346 residues long: Guanine nucleotide-binding protein subunit beta-2 (346 aa).

7 WD repeats span residues 57-96 (GHIN…KVQV), 99-138 (LRSA…ASGV), 147-185 (GYEG…KTMD), 188-227 (GHAG…HKQM), 230-269 (GHEM…QIAL), 274-313 (QKNT…HNGM), and 316-346 (GHEN…RLWL).

Belongs to the WD repeat G protein beta family. In terms of assembly, g proteins are composed of 3 units, alpha, beta and gamma. Interacts with Ggammae/Guanine nucleotide-binding protein subunit gamma-e.

Guanine nucleotide-binding proteins (G proteins) are involved as modulators or transducers in various transmembrane signaling systems. The beta and gamma chains are required for the GTPase activity, for replacement of GDP by GTP, and for G protein-effector interaction. The sequence is that of Guanine nucleotide-binding protein subunit beta-2 from Calliphora vicina (Blue blowfly).